The sequence spans 253 residues: uncharacterized protein (253 aa).

Residues 1 to 15 form the signal peptide; that stretch reads MNRVILFHFHFFKNA.

This is an uncharacterized protein from Archaeoglobus fulgidus (strain ATCC 49558 / DSM 4304 / JCM 9628 / NBRC 100126 / VC-16).